Reading from the N-terminus, the 189-residue chain is Probable nicotinate-nucleotide adenylyltransferase (189 aa).

This sequence belongs to the NadD family.

It carries out the reaction nicotinate beta-D-ribonucleotide + ATP + H(+) = deamido-NAD(+) + diphosphate. The protein operates within cofactor biosynthesis; NAD(+) biosynthesis; deamido-NAD(+) from nicotinate D-ribonucleotide: step 1/1. Functionally, catalyzes the reversible adenylation of nicotinate mononucleotide (NaMN) to nicotinic acid adenine dinucleotide (NaAD). This Staphylococcus aureus (strain N315) protein is Probable nicotinate-nucleotide adenylyltransferase.